The sequence spans 259 residues: Imidazole glycerol phosphate synthase subunit HisF (259 aa).

Active-site residues include Asp-11 and Asp-130.

It belongs to the HisA/HisF family. In terms of assembly, heterodimer of HisH and HisF.

The protein localises to the cytoplasm. It carries out the reaction 5-[(5-phospho-1-deoxy-D-ribulos-1-ylimino)methylamino]-1-(5-phospho-beta-D-ribosyl)imidazole-4-carboxamide + L-glutamine = D-erythro-1-(imidazol-4-yl)glycerol 3-phosphate + 5-amino-1-(5-phospho-beta-D-ribosyl)imidazole-4-carboxamide + L-glutamate + H(+). Its pathway is amino-acid biosynthesis; L-histidine biosynthesis; L-histidine from 5-phospho-alpha-D-ribose 1-diphosphate: step 5/9. Its function is as follows. IGPS catalyzes the conversion of PRFAR and glutamine to IGP, AICAR and glutamate. The HisF subunit catalyzes the cyclization activity that produces IGP and AICAR from PRFAR using the ammonia provided by the HisH subunit. This chain is Imidazole glycerol phosphate synthase subunit HisF, found in Nitratidesulfovibrio vulgaris (strain DP4) (Desulfovibrio vulgaris).